The following is a 336-amino-acid chain: Acetyl-coenzyme A carboxylase carboxyl transferase subunit beta (336 aa).

In terms of domain architecture, CoA carboxyltransferase N-terminal spans 27–297 (LWTKCESCQG…VAPAPAPAAT (271 aa)). The Zn(2+) site is built by cysteine 31, cysteine 34, cysteine 50, and cysteine 53. The segment at 31-53 (CESCQGILYRPDLERNLEVCPKC) adopts a C4-type zinc-finger fold. The tract at residues 287–336 (SVAPAPAPAATVDPEPESAEPEAPAEEAGPAGAAGDQAGESQDEGDPRNA) is disordered. The span at 300–311 (PEPESAEPEAPA) shows a compositional bias: acidic residues. Low complexity predominate over residues 312 to 326 (EEAGPAGAAGDQAGE).

The protein belongs to the AccD/PCCB family. Acetyl-CoA carboxylase is a heterohexamer composed of biotin carboxyl carrier protein (AccB), biotin carboxylase (AccC) and two subunits each of ACCase subunit alpha (AccA) and ACCase subunit beta (AccD). Zn(2+) is required as a cofactor.

Its subcellular location is the cytoplasm. The catalysed reaction is N(6)-carboxybiotinyl-L-lysyl-[protein] + acetyl-CoA = N(6)-biotinyl-L-lysyl-[protein] + malonyl-CoA. It functions in the pathway lipid metabolism; malonyl-CoA biosynthesis; malonyl-CoA from acetyl-CoA: step 1/1. In terms of biological role, component of the acetyl coenzyme A carboxylase (ACC) complex. Biotin carboxylase (BC) catalyzes the carboxylation of biotin on its carrier protein (BCCP) and then the CO(2) group is transferred by the transcarboxylase to acetyl-CoA to form malonyl-CoA. The polypeptide is Acetyl-coenzyme A carboxylase carboxyl transferase subunit beta (Halorhodospira halophila (strain DSM 244 / SL1) (Ectothiorhodospira halophila (strain DSM 244 / SL1))).